Consider the following 297-residue polypeptide: Lipoyl synthase (297 aa).

The [4Fe-4S] cluster site is built by cysteine 40, cysteine 45, cysteine 51, cysteine 67, cysteine 71, cysteine 74, and serine 280. Residues 53 to 269 (AVRKTATFMI…KEIALSKGFS (217 aa)) enclose the Radical SAM core domain.

This sequence belongs to the radical SAM superfamily. Lipoyl synthase family. Requires [4Fe-4S] cluster as cofactor.

It is found in the cytoplasm. The catalysed reaction is [[Fe-S] cluster scaffold protein carrying a second [4Fe-4S](2+) cluster] + N(6)-octanoyl-L-lysyl-[protein] + 2 oxidized [2Fe-2S]-[ferredoxin] + 2 S-adenosyl-L-methionine + 4 H(+) = [[Fe-S] cluster scaffold protein] + N(6)-[(R)-dihydrolipoyl]-L-lysyl-[protein] + 4 Fe(3+) + 2 hydrogen sulfide + 2 5'-deoxyadenosine + 2 L-methionine + 2 reduced [2Fe-2S]-[ferredoxin]. Its pathway is protein modification; protein lipoylation via endogenous pathway; protein N(6)-(lipoyl)lysine from octanoyl-[acyl-carrier-protein]. Functionally, catalyzes the radical-mediated insertion of two sulfur atoms into the C-6 and C-8 positions of the octanoyl moiety bound to the lipoyl domains of lipoate-dependent enzymes, thereby converting the octanoylated domains into lipoylated derivatives. The protein is Lipoyl synthase of Bacillus cereus (strain ATCC 14579 / DSM 31 / CCUG 7414 / JCM 2152 / NBRC 15305 / NCIMB 9373 / NCTC 2599 / NRRL B-3711).